Consider the following 714-residue polypeptide: Calpain-1 catalytic subunit (714 aa).

The residue at position 2 (Ser2) is an N-acetylserine. In terms of domain architecture, Calpain catalytic spans 55 to 354 (LFRDEAFPPV…FTRLEICNLT (300 aa)). Residues Gln109 and Asp114 each contribute to the Ca(2+) site. Catalysis depends on residues Cys115, His272, and Asn296. Positions 316, 318, and 323 each coordinate Ca(2+). Thr354 bears the Phosphothreonine mark. Residues 355–526 (PDALKSRTIR…KSAGTVELDD (172 aa)) are domain III. Residues 527-542 (QIQANLPDEQVLSEEE) are linker. EF-hand domains lie at 541–576 (EEIDENFKALFRQLAGEDMEISVKELRTILNRIISK), 585–618 (FSLESCRSMVNLMDRDGNGKLGLVEFNILWNRIR), 615–650 (NRIRNYLSIFRKFDLDKSGSMSAYEMRMAIESAGFK), and 680–714 (VRLETMFRFFKTLDTDLDGVVTFDLFKWLQLTMFA). A domain IV region spans residues 543–713 (IDENFKALFR…LFKWLQLTMF (171 aa)). Ca(2+) contacts are provided by Asp598, Asp600, Asn602, Lys604, Glu609, Asp628, Asp630, Ser632, Ser634, and Glu639.

Belongs to the peptidase C2 family. As to quaternary structure, forms a heterodimer with a small (regulatory) subunit CAPNS1. It depends on Ca(2+) as a cofactor. Undergoes calcium-induced successive autoproteolytic cleavages that generate a membrane-bound 78 kDa active form and an intracellular 75 kDa active form. Calpastatin reduces with high efficiency the transition from 78 kDa to 75 kDa calpain forms. Ubiquitous.

The protein resides in the cytoplasm. It localises to the cell membrane. It carries out the reaction Broad endopeptidase specificity.. Its activity is regulated as follows. Activated by micromolar concentrations of calcium and inhibited by calpastatin. Calcium-regulated non-lysosomal thiol-protease which catalyzes limited proteolysis of substrates involved in cytoskeletal remodeling and signal transduction. Proteolytically cleaves CTBP1 at 'Asn-375', 'Gly-387' and 'His-409'. Cleaves and activates caspase-7 (CASP7). The polypeptide is Calpain-1 catalytic subunit (Homo sapiens (Human)).